The chain runs to 82 residues: MAVRIRLKRFGAKKRPFYRIVVADSRSPRDGRFIDEIGYYNPIAEPAEIKIDVEKAKKWLSVGAQPSDTVKSLFRKEGIINN.

Belongs to the bacterial ribosomal protein bS16 family.

This chain is Small ribosomal subunit protein bS16, found in Caldanaerobacter subterraneus subsp. tengcongensis (strain DSM 15242 / JCM 11007 / NBRC 100824 / MB4) (Thermoanaerobacter tengcongensis).